A 252-amino-acid chain; its full sequence is 5-oxoprolinase subunit A (252 aa).

This sequence belongs to the LamB/PxpA family. As to quaternary structure, forms a complex composed of PxpA, PxpB and PxpC.

The catalysed reaction is 5-oxo-L-proline + ATP + 2 H2O = L-glutamate + ADP + phosphate + H(+). Its function is as follows. Catalyzes the cleavage of 5-oxoproline to form L-glutamate coupled to the hydrolysis of ATP to ADP and inorganic phosphate. The protein is 5-oxoprolinase subunit A of Chloroflexus aggregans (strain MD-66 / DSM 9485).